The following is a 347-amino-acid chain: NADH-ubiquinone oxidoreductase chain 2 (347 aa).

10 helical membrane-spanning segments follow: residues 26–46, 60–80, 96–116, 123–143, 151–171, 178–198, 200–220, 240–260, 274–294, and 325–345; these read WLLA…ILTM, FLTQ…NFML, SMAL…FWVP, SLTS…SILY, ITIL…GGLN, ILAY…PYNP, LTIL…MIMM, MMIL…LSGF, DSII…YFYM, and LLPP…FLSI.

It belongs to the complex I subunit 2 family. Core subunit of respiratory chain NADH dehydrogenase (Complex I) which is composed of 45 different subunits. Interacts with TMEM242.

It localises to the mitochondrion inner membrane. The catalysed reaction is a ubiquinone + NADH + 5 H(+)(in) = a ubiquinol + NAD(+) + 4 H(+)(out). In terms of biological role, core subunit of the mitochondrial membrane respiratory chain NADH dehydrogenase (Complex I) which catalyzes electron transfer from NADH through the respiratory chain, using ubiquinone as an electron acceptor. Essential for the catalytic activity and assembly of complex I. In Dugong dugon (Dugong), this protein is NADH-ubiquinone oxidoreductase chain 2.